We begin with the raw amino-acid sequence, 673 residues long: eEF1A lysine and N-terminal methyltransferase homolog (673 aa).

It belongs to the methyltransferase superfamily.

The enzyme catalyses L-lysyl-[protein] + S-adenosyl-L-methionine = N(6)-methyl-L-lysyl-[protein] + S-adenosyl-L-homocysteine + H(+). It carries out the reaction N(6)-methyl-L-lysyl-[protein] + S-adenosyl-L-methionine = N(6),N(6)-dimethyl-L-lysyl-[protein] + S-adenosyl-L-homocysteine + H(+). The catalysed reaction is N-terminal glycyl-L-lysyl-L-glutamyl-[protein] + 3 S-adenosyl-L-methionine = N-terminal N,N,N-trimethyl-glycyl-L-lysyl-L-glutamyl-[protein] + 3 S-adenosyl-L-homocysteine + 3 H(+). In terms of biological role, dual methyltransferase. It catalyzes N-terminal methylation of target proteins via its C-terminus. It catalyzes dimethylation on lysine residues of target proteins via its N-terminus. The polypeptide is eEF1A lysine and N-terminal methyltransferase homolog (Drosophila melanogaster (Fruit fly)).